We begin with the raw amino-acid sequence, 1158 residues long: ATP-dependent helicase/deoxyribonuclease subunit B (1158 aa).

This sequence belongs to the helicase family. AddB/RexB type 2 subfamily. Heterodimer of AddA and RexB. Requires Mg(2+) as cofactor.

Functionally, the heterodimer acts as both an ATP-dependent DNA helicase and an ATP-dependent, dual-direction single-stranded exonuclease. Recognizes the chi site generating a DNA molecule suitable for the initiation of homologous recombination. This subunit has 5' -&gt; 3' nuclease activity but not helicase activity. This Lactobacillus gasseri (strain ATCC 33323 / DSM 20243 / BCRC 14619 / CIP 102991 / JCM 1131 / KCTC 3163 / NCIMB 11718 / NCTC 13722 / AM63) protein is ATP-dependent helicase/deoxyribonuclease subunit B.